The sequence spans 207 residues: Ras-related protein Rab-8B (207 aa).

The GTP site is built by serine 17, glycine 18, valine 19, glycine 20, lysine 21, threonine 22, cysteine 23, threonine 35, serine 39, and threonine 40. Threonine 22 serves as a coordination point for Mg(2+). 2 short sequence motifs (switch) span residues 31–45 and 63–80; these read DAFN…GIDF and DTAG…YYRG. Mg(2+) is bound by residues threonine 40 and aspartate 63. A GTP-binding site is contributed by glycine 66. A Phosphothreonine modification is found at threonine 72. 5 residues coordinate GTP: asparagine 121, lysine 122, aspartate 124, alanine 152, and lysine 153. Residues serine 180 and serine 183 each carry the phosphoserine modification. Cysteine 204 bears the Cysteine methyl ester mark. A lipid anchor (S-geranylgeranyl cysteine) is attached at cysteine 204. The propeptide at 205 to 207 is removed in mature form; it reads LLL.

This sequence belongs to the small GTPase superfamily. Rab family. As to quaternary structure, associated with actin, delta-catenin and alpha and beta tubulins. Interacts with OTOF. Interacts with PEX5R. Interacts with RAB3IP. Interacts with VIM. Interacts with CDH1. Interacts with MICALL2. Interacts with GDI1, GDI2, CHML and CHM; phosphorylation at Thr-72 disrupts these interactions. Interacts with MICAL1. Requires Mg(2+) as cofactor. In terms of processing, phosphorylation of Thr-72 in the switch II region by LRRK2 prevents the association of RAB regulatory proteins, including CHM, CHML and RAB GDP dissociation inhibitors GDI1 and GDI2.

It localises to the cell membrane. Its subcellular location is the cytoplasmic vesicle. The protein resides in the phagosome membrane. It is found in the endosome membrane. The enzyme catalyses GTP + H2O = GDP + phosphate + H(+). With respect to regulation, regulated by guanine nucleotide exchange factors (GEFs) including RAB3IP/RABIN8 which promotes the exchange of bound GDP for free GTP. Regulated by GTPase activating proteins (GAPs) which increase the GTP hydrolysis activity. Inhibited by GDP dissociation inhibitors (GDIs). Functionally, the small GTPases Rab are key regulators of intracellular membrane trafficking, from the formation of transport vesicles to their fusion with membranes. Rabs cycle between an inactive GDP-bound form and an active GTP-bound form that is able to recruit to membranes different sets of downstream effectors directly responsible for vesicle formation, movement, tethering and fusion. RAB8B may be involved in polarized vesicular trafficking and neurotransmitter release. May participate in cell junction dynamics in Sertoli cells. May also participate in the export of a subset of neosynthesized proteins through a Rab8-Rab10-Rab11-dependent endososomal export route. The chain is Ras-related protein Rab-8B (RAB8B) from Bos taurus (Bovine).